Consider the following 550-residue polypeptide: CTP synthase (550 aa).

Residues 1–271 (MTRYIFITGG…DAEVLDVFGM (271 aa)) are amidoligase domain. Ser-13 lines the CTP pocket. Ser-13 is a binding site for UTP. 14-19 (SLGKGL) provides a ligand contact to ATP. Tyr-54 is a binding site for L-glutamine. Asp-71 contacts ATP. The Mg(2+) site is built by Asp-71 and Glu-145. CTP is bound by residues 152–154 (DIE), 192–197 (KTKPTQ), and Lys-228. UTP is bound by residues 192–197 (KTKPTQ) and Lys-228. The Glutamine amidotransferase type-1 domain occupies 297 to 549 (TIAVVGKYTV…IAAAKEHGRL (253 aa)). Gly-361 is a binding site for L-glutamine. Cys-388 acts as the Nucleophile; for glutamine hydrolysis in catalysis. Residues 389-392 (FGMQ), Glu-412, and Arg-477 each bind L-glutamine. Residues His-522 and Glu-524 contribute to the active site.

This sequence belongs to the CTP synthase family. In terms of assembly, homotetramer.

The enzyme catalyses UTP + L-glutamine + ATP + H2O = CTP + L-glutamate + ADP + phosphate + 2 H(+). It catalyses the reaction L-glutamine + H2O = L-glutamate + NH4(+). It carries out the reaction UTP + NH4(+) + ATP = CTP + ADP + phosphate + 2 H(+). The protein operates within pyrimidine metabolism; CTP biosynthesis via de novo pathway; CTP from UDP: step 2/2. Its activity is regulated as follows. Allosterically activated by GTP, when glutamine is the substrate; GTP has no effect on the reaction when ammonia is the substrate. The allosteric effector GTP functions by stabilizing the protein conformation that binds the tetrahedral intermediate(s) formed during glutamine hydrolysis. Inhibited by the product CTP, via allosteric rather than competitive inhibition. Catalyzes the ATP-dependent amination of UTP to CTP with either L-glutamine or ammonia as the source of nitrogen. Regulates intracellular CTP levels through interactions with the four ribonucleotide triphosphates. This is CTP synthase from Caulobacter vibrioides (strain ATCC 19089 / CIP 103742 / CB 15) (Caulobacter crescentus).